The primary structure comprises 444 residues: MIRKYQKSNVVIIGFGKTGLSCLNFFLIRGVIPKIIDTRQYPSEMKNLPSFVEYCFGRLNDFWILNANLIVVSPGVRLDHPIIIEAMKLGIEVVGDIELFVREISAPIIAITGSNGKSTVTQLVSKMAKQAGWSVGVAGNIGVPVLSLLKKQYELYVLEISSFQLDVTYSLRATAATILNISVDHMDRYPKGLEEYICSKKRIYHNSYFCVVNDSDPLTKPLLNDGIYHVSFSMNSKSADYRLEYYKGNNWIVANGEYVLSCAELKINNCMNYMNMLSALALSDIVKIPRIVSLQVLRFFSGLSHRFQLVYKNRNVCWINDSKATNVGATKEAINNTIITLRDGNLHLLLGGDGKLANFFELSCLIKHYAIHLYCFGKDGVCLTQSGFNDVFLSNNIIDAMYIISRRVQRKDIVLLSPACASLDQFSSFRARGNLFTYLAQRLG.

Residue 113-119 participates in ATP binding; the sequence is GSNGKST.

This sequence belongs to the MurCDEF family.

It is found in the cytoplasm. It carries out the reaction UDP-N-acetyl-alpha-D-muramoyl-L-alanine + D-glutamate + ATP = UDP-N-acetyl-alpha-D-muramoyl-L-alanyl-D-glutamate + ADP + phosphate + H(+). It functions in the pathway cell wall biogenesis; peptidoglycan biosynthesis. Its function is as follows. Cell wall formation. Catalyzes the addition of glutamate to the nucleotide precursor UDP-N-acetylmuramoyl-L-alanine (UMA). The polypeptide is UDP-N-acetylmuramoylalanine--D-glutamate ligase (Blochmanniella floridana).